A 216-amino-acid chain; its full sequence is UPF0193 protein EVG1 homolog (216 aa).

Belongs to the UPF0193 (EVG1) family.

The chain is UPF0193 protein EVG1 homolog from Mus musculus (Mouse).